Reading from the N-terminus, the 317-residue chain is Spore protein CgeB (317 aa).

Functionally, may be involved in maturation of the outermost layer of the spore. May act as a glycosyltransferase that contributes to the glycosylation state of the spore. This is Spore protein CgeB from Bacillus subtilis (strain 168).